The sequence spans 266 residues: Family of serine hydrolases 3 (266 aa).

Catalysis depends on charge relay system residues serine 117, aspartate 180, and histidine 209.

It belongs to the AB hydrolase 3 family.

In terms of biological role, serine hydrolase of unknown specificity. The protein is Family of serine hydrolases 3 (FSH3) of Saccharomyces cerevisiae (strain ATCC 204508 / S288c) (Baker's yeast).